Reading from the N-terminus, the 1016-residue chain is Protein TIC110, chloroplastic (1016 aa).

Residues 1–51 (MNPSLVTAINAPISPSPRSPLLSHFLPTLPHRFSKSECLSRRRYRVSFPRS) constitute a chloroplast transit peptide. At Ser52 the chain carries N-acetylserine. The Stromal portion of the chain corresponds to 52–95 (SAASSDQLSVSTQAKNPGIHGNKKELTGLQPIVEKMTPPVRLAT). Residues 96-116 (SAVVLAASLATGYGLGLRLAG) form a helical membrane-spanning segment. The Chloroplast intermembrane portion of the chain corresponds to 117–118 (SR). Residues 119–139 (NIAFGGAAVAGAAGGAVVYAL) traverse the membrane as a helical segment. Residues 140–259 (NSAVPEVAAI…EREGDAEQRR (120 aa)) are Stromal-facing. A helical membrane pass occupies residues 260–280 (AFMRLVYVSALVFGDASSFLL). Topologically, residues 281 to 368 (PWKRVLKVTD…SILKSRTRAA (88 aa)) are chloroplast intermembrane. The helical transmembrane segment at 369 to 386 (KSLASVVEELEKVLEFNN) threads the bilayer. Residues 387–632 (LLVSLKSHSE…RAAENRTDSA (246 aa)) are Stromal-facing. The chain crosses the membrane as a helical span at residues 633–650 (KELKKMIAFNTLVVTEMV). The Chloroplast intermembrane portion of the chain corresponds to 651–719 (ADIKGESSDK…DDLPDRDRID (69 aa)). Over residues 654-669 (KGESSDKAPEEDPVQE) the composition is skewed to basic and acidic residues. Residues 654 to 708 (KGESSDKAPEEDPVQEKEEDDEDEEWGSLESLRKTRPDKELAEKMGKPGQTEITL) are disordered. Over residues 670–680 (KEEDDEDEEWG) the composition is skewed to acidic residues. Positions 684–699 (SLRKTRPDKELAEKMG) are enriched in basic and acidic residues. Residues 720–736 (LYKTYLLYCVTGEVTRI) form a helical membrane-spanning segment. Residues 737-1016 (PFGAQITTKR…SAAEEGNFVF (280 aa)) are Stromal-facing.

Belongs to the chloroplast envelope anion channel-forming Tic110 (TC 1.A.18) family. Part of the Tic complex. Interacts with HSP70, HSP93 and TIC40. Interacts with the Toc complex components TOC33, TOC75 and TOC159. Interacts with LTD. As to expression, expressed in seedlings, flowers, leaves, stems and roots.

The protein localises to the plastid. It is found in the chloroplast inner membrane. Involved in protein precursor import into chloroplasts. Forms a voltage-dependent cation-selective channel at the inner envelope of chloroplasts, which specifically responds to a transit peptide. Associates with both the precursor and mature forms of the preprotein. The protein is Protein TIC110, chloroplastic (TIC110) of Arabidopsis thaliana (Mouse-ear cress).